The primary structure comprises 151 residues: High mobility group B protein 14 (151 aa).

Disordered regions lie at residues 1–62 and 132–151; these read MTKR…QTKM and TKRM…DYSE. The segment covering 7–20 has biased composition (low complexity); sequence KSGPLSPSCSGGSS. Residues 35–56 are compositionally biased toward basic residues; the sequence is RSTRLRLQPLRKPKTSPKKKPV. Residues 63 to 132 constitute a DNA-binding region (HMG box); sequence PKKPATAFFF…EFHRAMTEYT (70 aa). The segment covering 132–142 has biased composition (basic and acidic residues); that stretch reads TKRMESGAHDE. Ser-150 carries the phosphoserine modification.

This sequence belongs to the HMGB family.

The protein resides in the nucleus. This Arabidopsis thaliana (Mouse-ear cress) protein is High mobility group B protein 14 (HMGB14).